A 293-amino-acid chain; its full sequence is MPTFGRLLTAMVTPMTPDGAVDYQRAGELAKHLVAAGSEGLVVSGTTGESPTLSHEEKLRLFETVVDAVGGQVSVIAGTGSNNTAESIRFSREAARTGVHGLLLVTPYYNKPPQEGLYRHFRAVAEAVDLPCILYNVPSRTSVNMLPATTLRLARDVPNIVGIKECADVGQLADILSGAPEGFRVWSGDDANLLPYLTVGAYGIISVASHVVGPQMRELIDAFLAGDTARAAAWHRRLLPVFRGLFAVTNPILVKAALRLTGFPVGPVRLPLVDATEEQEEALREVLAEAGVL.

Residue T47 coordinates pyruvate. The Proton donor/acceptor role is filled by Y135. The active-site Schiff-base intermediate with substrate is K164. I205 is a pyruvate binding site.

The protein belongs to the DapA family. In terms of assembly, homotetramer; dimer of dimers.

The protein resides in the cytoplasm. The enzyme catalyses L-aspartate 4-semialdehyde + pyruvate = (2S,4S)-4-hydroxy-2,3,4,5-tetrahydrodipicolinate + H2O + H(+). Its pathway is amino-acid biosynthesis; L-lysine biosynthesis via DAP pathway; (S)-tetrahydrodipicolinate from L-aspartate: step 3/4. Its function is as follows. Catalyzes the condensation of (S)-aspartate-beta-semialdehyde [(S)-ASA] and pyruvate to 4-hydroxy-tetrahydrodipicolinate (HTPA). The sequence is that of 4-hydroxy-tetrahydrodipicolinate synthase from Symbiobacterium thermophilum (strain DSM 24528 / JCM 14929 / IAM 14863 / T).